The sequence spans 231 residues: Protein RhiA (231 aa).

Functionally, may be involved in plant-microbe interaction. The chain is Protein RhiA (rhiA) from Rhizobium leguminosarum bv. viciae.